The primary structure comprises 659 residues: Beta-galactosidase BgaA (659 aa).

R103 is a binding site for substrate. Zn(2+) is bound at residue C107. Substrate is bound at residue N141. E142 acts as the Proton donor in catalysis. 3 residues coordinate Zn(2+): C148, C150, and C153. E298 functions as the Nucleophile in the catalytic mechanism. W307 is a substrate binding site.

This sequence belongs to the glycosyl hydrolase 42 family. Dimer.

The enzyme catalyses Hydrolysis of terminal non-reducing beta-D-galactose residues in beta-D-galactosides.. With respect to regulation, inhibited by Cu(2+), Hg(2+) and Zn(2+). No effect with Ca(2+), Mg(2+), Mn(2+) or excess EDTA (10 mM). Involved in plant cell wall degradation in cooperation with cellulosome. Hydrolyzes both p-nitrophenyl-alpha-L-arabinopyranoside (pNPAp) and p-nitrophenyl-beta-D-galactopyranoside (pNPGp), with higher activity for pNPAp. Shows hydrolysis activity against p-nitrophenyl-beta-D-fucopyranoside (pNPFp), but not against p-nitrophenyl-alpha-L-arabinofuranoside (pNPAf), o-nitrophenyl-beta-D-galactopyranoside (oNPGp), p-nitrophenyl-beta-D-xylopyranoside (pNPXp), p-nitrophenyl-beta-D-glucopyranoside (pNPGLp), p-nitrophenyl-beta-D-cellobiopyranoside (pNPCp), p-nitrophenyl-beta-lactopyranoside (pNPLp) or p-nitrophenyl-alpha-galactopyranoside (pNPalphaGp). No detectable activity against arabinan or arabinoxylan, but activity against arabinogalactan can be detected. Increases degradation activity of alpha-L-arabinofuranosidase (ArfA) and endo-1,4-beta-xylanase (XynA) when corn fiber gum and corn stem powder are used as substrates. This chain is Beta-galactosidase BgaA (bgaA), found in Clostridium cellulovorans (strain ATCC 35296 / DSM 3052 / OCM 3 / 743B).